A 167-amino-acid chain; its full sequence is Protein MIX23 (167 aa).

Positions 81-108 are disordered; the sequence is QLDQDRNTSKSPLKSQQQLPSSSTTQVS. Residues 89 to 106 show a composition bias toward low complexity; sequence SKSPLKSQQQLPSSSTTQ.

The protein belongs to the MIX23 family.

The protein is Protein MIX23 (cid2) of Schizosaccharomyces pombe (strain 972 / ATCC 24843) (Fission yeast).